We begin with the raw amino-acid sequence, 271 residues long: Phosphatidylglycerol--prolipoprotein diacylglyceryl transferase (271 aa).

Helical transmembrane passes span 17–37, 63–83, and 95–115; these read LAIH…FFLA, ILFL…CLFY, and IFAV…VLVS. An a 1,2-diacyl-sn-glycero-3-phospho-(1'-sn-glycerol)-binding site is contributed by arginine 146. A run of 3 helical transmembrane segments spans residues 182 to 202, 209 to 229, and 243 to 263; these read SQVY…WLYA, GQVS…AEFF, and MSMG…LWIW.

The protein belongs to the Lgt family.

It is found in the cell inner membrane. The enzyme catalyses L-cysteinyl-[prolipoprotein] + a 1,2-diacyl-sn-glycero-3-phospho-(1'-sn-glycerol) = an S-1,2-diacyl-sn-glyceryl-L-cysteinyl-[prolipoprotein] + sn-glycerol 1-phosphate + H(+). It functions in the pathway protein modification; lipoprotein biosynthesis (diacylglyceryl transfer). Its function is as follows. Catalyzes the transfer of the diacylglyceryl group from phosphatidylglycerol to the sulfhydryl group of the N-terminal cysteine of a prolipoprotein, the first step in the formation of mature lipoproteins. The protein is Phosphatidylglycerol--prolipoprotein diacylglyceryl transferase of Polaromonas naphthalenivorans (strain CJ2).